We begin with the raw amino-acid sequence, 219 residues long: Cytidylate kinase (219 aa).

ATP is bound at residue 10-18 (GPAAAGKST).

It belongs to the cytidylate kinase family. Type 1 subfamily.

The protein localises to the cytoplasm. It catalyses the reaction CMP + ATP = CDP + ADP. It carries out the reaction dCMP + ATP = dCDP + ADP. The chain is Cytidylate kinase from Staphylococcus aureus (strain bovine RF122 / ET3-1).